We begin with the raw amino-acid sequence, 316 residues long: Ribosomal RNA small subunit methyltransferase H (316 aa).

S-adenosyl-L-methionine is bound by residues 35-37 (AGH), Asp-55, Phe-84, Asp-105, and Gln-112.

This sequence belongs to the methyltransferase superfamily. RsmH family.

It localises to the cytoplasm. The enzyme catalyses cytidine(1402) in 16S rRNA + S-adenosyl-L-methionine = N(4)-methylcytidine(1402) in 16S rRNA + S-adenosyl-L-homocysteine + H(+). Functionally, specifically methylates the N4 position of cytidine in position 1402 (C1402) of 16S rRNA. In Streptococcus pneumoniae (strain Hungary19A-6), this protein is Ribosomal RNA small subunit methyltransferase H.